The chain runs to 286 residues: MIINHNMSAMFSQRTLGHTNLSVQKNIEKLSSGLRINRSGDDASGLAVSEKMRSQIRGLNQASTNAQNGISFIQVAEAFLQETTDVIQRIRELSVQAANGIYSAEDRLYIQVEVSQLVAEVDRIASHAQFNGMNMLTGRFARQGGENTVTASMWFHIGANMDQRTRAYIGTMTAVAMGIRDAGDESVMNIDSPEKANRAIGTLDQAIKRINKQRADLGAYQNRLDHTVAGINVAAENLQAAESRIRDVDMAKEMVDYTKNQILVQSGTAMLAQANQATQSVLSLLR.

This sequence belongs to the bacterial flagellin family. As to quaternary structure, the flagellum consists of an outer layer composed of repeating units of FlaA around a core that contains several antigenically related polypeptides. Interacts with FliW; a synthetic peptide of FlaB1 (residues 229-247) partially blocks binding of this protein to FliW.

The protein localises to the periplasmic flagellum. Its subcellular location is the periplasm. Its function is as follows. Component of the core of the flagella. The chain is Flagellin FlaB2 from Treponema pallidum (strain Nichols).